Consider the following 75-residue polypeptide: Small ribosomal subunit protein bS18 (75 aa).

Belongs to the bacterial ribosomal protein bS18 family. Part of the 30S ribosomal subunit. Forms a tight heterodimer with protein bS6.

Its function is as follows. Binds as a heterodimer with protein bS6 to the central domain of the 16S rRNA, where it helps stabilize the platform of the 30S subunit. The chain is Small ribosomal subunit protein bS18 from Anaplasma marginale (strain St. Maries).